The primary structure comprises 180 residues: Membrane protein UL121 (180 aa).

The first 27 residues, 1 to 27 (MWGCGWSRILVLLLLMCMALMARGTYG), serve as a signal peptide directing secretion. A helical transmembrane segment spans residues 143 to 163 (LGLLYAVCLILSFSIVTAALW).

The protein belongs to the HHV-5 UL121 protein family.

It is found in the host membrane. In Human cytomegalovirus (strain Merlin) (HHV-5), this protein is Membrane protein UL121 (UL121).